Here is a 417-residue protein sequence, read N- to C-terminus: Multifunctional CCA protein (417 aa).

The ATP site is built by glycine 8 and arginine 11. Residues glycine 8 and arginine 11 each coordinate CTP. Residues aspartate 21 and aspartate 23 each contribute to the Mg(2+) site. ATP is bound by residues arginine 91, arginine 137, and arginine 140. Residues arginine 91, arginine 137, and arginine 140 each coordinate CTP. Positions 225–326 (SGIHTLMTLQ…LNVLKKTDAF (102 aa)) constitute an HD domain.

This sequence belongs to the tRNA nucleotidyltransferase/poly(A) polymerase family. Bacterial CCA-adding enzyme type 1 subfamily. In terms of assembly, monomer. Can also form homodimers and oligomers. The cofactor is Mg(2+). Ni(2+) is required as a cofactor.

The enzyme catalyses a tRNA precursor + 2 CTP + ATP = a tRNA with a 3' CCA end + 3 diphosphate. The catalysed reaction is a tRNA with a 3' CCA end + 2 CTP + ATP = a tRNA with a 3' CCACCA end + 3 diphosphate. Functionally, catalyzes the addition and repair of the essential 3'-terminal CCA sequence in tRNAs without using a nucleic acid template. Adds these three nucleotides in the order of C, C, and A to the tRNA nucleotide-73, using CTP and ATP as substrates and producing inorganic pyrophosphate. tRNA 3'-terminal CCA addition is required both for tRNA processing and repair. Also involved in tRNA surveillance by mediating tandem CCA addition to generate a CCACCA at the 3' terminus of unstable tRNAs. While stable tRNAs receive only 3'-terminal CCA, unstable tRNAs are marked with CCACCA and rapidly degraded. The protein is Multifunctional CCA protein of Neisseria meningitidis serogroup C / serotype 2a (strain ATCC 700532 / DSM 15464 / FAM18).